The sequence spans 475 residues: ATP synthase subunit beta 1 (475 aa).

153–160 contributes to the ATP binding site; that stretch reads GGAGVGKT.

It belongs to the ATPase alpha/beta chains family. F-type ATPases have 2 components, CF(1) - the catalytic core - and CF(0) - the membrane proton channel. CF(1) has five subunits: alpha(3), beta(3), gamma(1), delta(1), epsilon(1). CF(0) has three main subunits: a(1), b(2) and c(9-12). The alpha and beta chains form an alternating ring which encloses part of the gamma chain. CF(1) is attached to CF(0) by a central stalk formed by the gamma and epsilon chains, while a peripheral stalk is formed by the delta and b chains.

Its subcellular location is the cell membrane. It catalyses the reaction ATP + H2O + 4 H(+)(in) = ADP + phosphate + 5 H(+)(out). In terms of biological role, produces ATP from ADP in the presence of a proton gradient across the membrane. The catalytic sites are hosted primarily by the beta subunits. This chain is ATP synthase subunit beta 1, found in Mycoplasmopsis pulmonis (strain UAB CTIP) (Mycoplasma pulmonis).